A 33-amino-acid polypeptide reads, in one-letter code: ACKGLFVTCTPGKDECCPNHVCSSKHKWCKYKI.

3 disulfide bridges follow: Cys-2–Cys-17, Cys-9–Cys-22, and Cys-16–Cys-29. Ile-33 is modified (isoleucine amide).

The protein belongs to the neurotoxin 10 (Hwtx-1) family. 11 (haplotoxin-2) subfamily. Expressed by the venom gland.

The protein resides in the secreted. Its function is as follows. Spider venom neurotoxin that blocks voltage-gated sodium channel Nav1.3/SCN3A in human (IC(50)=80 nM) and rat (IC(50)=160 nM). Partially inhibits human Kv11.1/KCNH2/ERG (25% at 175 uM). The polypeptide is Beta/kappa-theraphotoxin-Hlv1a (Cyriopagopus lividus (Cobalt blue tarantula)).